A 150-amino-acid chain; its full sequence is Large ribosomal subunit protein bL9 (150 aa).

It belongs to the bacterial ribosomal protein bL9 family.

Functionally, binds to the 23S rRNA. The sequence is that of Large ribosomal subunit protein bL9 from Wolinella succinogenes (strain ATCC 29543 / DSM 1740 / CCUG 13145 / JCM 31913 / LMG 7466 / NCTC 11488 / FDC 602W) (Vibrio succinogenes).